A 273-amino-acid chain; its full sequence is Type II methyltransferase M2.MboI (273 aa).

The protein belongs to the N(4)/N(6)-methyltransferase family.

It catalyses the reaction a 2'-deoxyadenosine in DNA + S-adenosyl-L-methionine = an N(6)-methyl-2'-deoxyadenosine in DNA + S-adenosyl-L-homocysteine + H(+). Its function is as follows. A beta subtype methylase that recognizes the double-stranded sequence 5'-GATC-3', methylates A-2 on both strands, and protects the DNA from cleavage by the MboI endonuclease. This seems to be a weaker methylase than M1.MboI. The chain is Type II methyltransferase M2.MboI (mboIBM) from Moraxella bovis.